A 532-amino-acid polypeptide reads, in one-letter code: Bifunctional purine biosynthesis protein PurH (532 aa).

The 147-residue stretch at 1-147 (MADRPIRQAL…KNHKDVAIVV (147 aa)) folds into the MGS-like domain.

This sequence belongs to the PurH family.

It carries out the reaction (6R)-10-formyltetrahydrofolate + 5-amino-1-(5-phospho-beta-D-ribosyl)imidazole-4-carboxamide = 5-formamido-1-(5-phospho-D-ribosyl)imidazole-4-carboxamide + (6S)-5,6,7,8-tetrahydrofolate. The catalysed reaction is IMP + H2O = 5-formamido-1-(5-phospho-D-ribosyl)imidazole-4-carboxamide. The protein operates within purine metabolism; IMP biosynthesis via de novo pathway; 5-formamido-1-(5-phospho-D-ribosyl)imidazole-4-carboxamide from 5-amino-1-(5-phospho-D-ribosyl)imidazole-4-carboxamide (10-formyl THF route): step 1/1. It participates in purine metabolism; IMP biosynthesis via de novo pathway; IMP from 5-formamido-1-(5-phospho-D-ribosyl)imidazole-4-carboxamide: step 1/1. This Haemophilus influenzae (strain ATCC 51907 / DSM 11121 / KW20 / Rd) protein is Bifunctional purine biosynthesis protein PurH.